The chain runs to 368 residues: Geranylgeranyl pyrophosphate synthase dpfgD (368 aa).

Residues Lys-48, Arg-51, and His-80 each contribute to the isopentenyl diphosphate site. Mg(2+)-binding residues include Asp-87 and Asp-91. Residue Arg-96 coordinates dimethylallyl diphosphate. Isopentenyl diphosphate is bound at residue Arg-97. The dimethylallyl diphosphate site is built by Lys-174, Thr-175, and Gln-208. Asp-211 is a binding site for Mg(2+). Residues Asn-215, Lys-225, and Lys-235 each contribute to the dimethylallyl diphosphate site.

Belongs to the FPP/GGPP synthase family. The cofactor is Mg(2+).

It catalyses the reaction isopentenyl diphosphate + dimethylallyl diphosphate = (2E)-geranyl diphosphate + diphosphate. It carries out the reaction isopentenyl diphosphate + (2E)-geranyl diphosphate = (2E,6E)-farnesyl diphosphate + diphosphate. The catalysed reaction is isopentenyl diphosphate + (2E,6E)-farnesyl diphosphate = (2E,6E,10E)-geranylgeranyl diphosphate + diphosphate. It participates in secondary metabolite biosynthesis; terpenoid biosynthesis. Geranylgeranyl pyrophosphate synthase; part of the gene cluster that mediates the biosynthesis of diterpenoid pyrones. The first step of the pathway is the synthesis of the alpha-pyrone moiety by the polyketide synthase dpfgA via condensation of one acetyl-CoA starter unit with 3 malonyl-CoA units and 2 methylations. The alpha-pyrone is then combined with geranylgeranyl pyrophosphate (GGPP) formed by the GGPP synthase dpfgD through the action of the prenyltransferase dpfgC to yield a linear alpha-pyrone diterpenoid. Subsequent steps in the diterpenoid pyrone biosynthetic pathway involve the decalin core formation, which is initiated by the epoxidation of the C10-C11 olefin by the FAD-dependent oxidoreductase dpfgE, and is followed by a cyclization cascade catalyzed by the terpene cyclase dpfgB. The short chain dehydrogenase/reductase dpfgG then oxidizes the 8S hydroxy group to a ketone and the short chain dehydrogenase/reductase dpfgH reduces the ketone to the 8R hydroxy group to yield higginsianin B. Higginsianin B is further methylated by the methyltransferase dpfgI to produce the intermediate named FDDP B. The cytochrome P450 monooxygenase dfgpJ then catalyzes a three-step oxidation at C-27 to generate a carboxylic acid as well as C-26 hydroxylation. Finally, methyltransferase dpfgK methylates the carboxylic acid generated by dpfgJ, yielding the final diterpenoid pyrones from the pathway which were named FDDP D and FDDP E. This is Geranylgeranyl pyrophosphate synthase dpfgD from Gibberella zeae (strain ATCC MYA-4620 / CBS 123657 / FGSC 9075 / NRRL 31084 / PH-1) (Wheat head blight fungus).